The following is a 559-amino-acid chain: Small ribosomal subunit protein bS1 (559 aa).

6 consecutive S1 motif domains span residues 21 to 87 (GSII…LSRE), 105 to 171 (SETV…VSRR), 192 to 260 (GIEI…LGLK), 277 to 347 (GIKL…LGLK), 364 to 434 (GIHV…LGIK), and 451 to 520 (GAII…LTFH).

This sequence belongs to the bacterial ribosomal protein bS1 family.

Functionally, binds mRNA; thus facilitating recognition of the initiation point. It is needed to translate mRNA with a short Shine-Dalgarno (SD) purine-rich sequence. The sequence is that of Small ribosomal subunit protein bS1 (rpsA) from Buchnera aphidicola subsp. Schizaphis graminum (strain Sg).